Consider the following 297-residue polypeptide: 4-diphosphocytidyl-2-C-methyl-D-erythritol kinase (297 aa).

The active site involves K10. 94–104 is a binding site for ATP; the sequence is PVAAGLAGGSS. The active site involves D136.

Belongs to the GHMP kinase family. IspE subfamily.

The catalysed reaction is 4-CDP-2-C-methyl-D-erythritol + ATP = 4-CDP-2-C-methyl-D-erythritol 2-phosphate + ADP + H(+). Its pathway is isoprenoid biosynthesis; isopentenyl diphosphate biosynthesis via DXP pathway; isopentenyl diphosphate from 1-deoxy-D-xylulose 5-phosphate: step 3/6. Functionally, catalyzes the phosphorylation of the position 2 hydroxy group of 4-diphosphocytidyl-2C-methyl-D-erythritol. The polypeptide is 4-diphosphocytidyl-2-C-methyl-D-erythritol kinase (Shouchella clausii (strain KSM-K16) (Alkalihalobacillus clausii)).